We begin with the raw amino-acid sequence, 157 residues long: Succinate dehydrogenase assembly factor 2-B, mitochondrial (157 aa).

Residues 1-22 (MLSQWFRGRHLVVRSALFSRRR) constitute a mitochondrion transit peptide.

It belongs to the SDHAF2 family. As to quaternary structure, interacts with the flavoprotein subunit within the SDH catalytic dimer.

It is found in the mitochondrion matrix. Plays an essential role in the assembly of succinate dehydrogenase (SDH), an enzyme complex (also referred to as respiratory complex II) that is a component of both the tricarboxylic acid (TCA) cycle and the mitochondrial electron transport chain, and which couples the oxidation of succinate to fumarate with the reduction of ubiquinone (coenzyme Q) to ubiquinol. Required for flavinylation (covalent attachment of FAD) of the flavoprotein subunit of the SDH catalytic dimer. The sequence is that of Succinate dehydrogenase assembly factor 2-B, mitochondrial from Drosophila mojavensis (Fruit fly).